We begin with the raw amino-acid sequence, 389 residues long: Sulfate adenylyltransferase (389 aa).

It belongs to the sulfate adenylyltransferase family.

It carries out the reaction sulfate + ATP + H(+) = adenosine 5'-phosphosulfate + diphosphate. It participates in sulfur metabolism; hydrogen sulfide biosynthesis; sulfite from sulfate: step 1/3. The sequence is that of Sulfate adenylyltransferase from Hyperthermus butylicus (strain DSM 5456 / JCM 9403 / PLM1-5).